The sequence spans 59 residues: Ribosome biogenesis protein Nop10 (59 aa).

This sequence belongs to the NOP10 family.

In terms of biological role, involved in ribosome biogenesis; more specifically in 18S rRNA pseudouridylation and in cleavage of pre-rRNA. The protein is Ribosome biogenesis protein Nop10 of Thermococcus kodakarensis (strain ATCC BAA-918 / JCM 12380 / KOD1) (Pyrococcus kodakaraensis (strain KOD1)).